A 382-amino-acid chain; its full sequence is MGIKGLTKLLADNAPKSMKENKFESYFGRKIAIDASMSIYQFLIVVGRSGTEMLTNEAGEVTSHLQGMFSRTIRLLEAGIKPVYVFDGKPPDLKKQELAKRYSKRAEATEDLSEALETANKEDIEKFSKRTVKVTKQHNDDCKRLLRLMGVPVVEAPSEAEAQCAALCKAGKVYGVVSEDMDSLTFGAPKFLRHLMDPSSKKIPVMEFEVAKILEELNMTMDQFIDLCILSGCDYCDSIRGIGGLTALKLIRQHGSIENIPENLNKERYQIPDNWPYQEARRLFKEPLVITDEKELDIKWSSPDEEGLITFLVNENGFNRDRVTKAIEKIKVAKNKSSQGRLESFFKPTANPSVPIKRKETPVNNAKETNKKTKAGGGKKKK.

The interval 1-105 (MGIKGLTKLL…QELAKRYSKR (105 aa)) is N-domain. Residue Asp34 coordinates Mg(2+). Residue Arg71 coordinates DNA. Asp87, Glu159, Glu161, Asp180, and Asp182 together coordinate Mg(2+). The tract at residues 123–254 (DIEKFSKRTV…LTALKLIRQH (132 aa)) is I-domain. DNA is bound at residue Glu159. Positions 232 and 234 each coordinate DNA. A Mg(2+)-binding site is contributed by Asp234. The interval 338 to 346 (SQGRLESFF) is interaction with PCNA. Residues 339 to 382 (QGRLESFFKPTANPSVPIKRKETPVNNAKETNKKTKAGGGKKKK) are disordered. The segment covering 372–382 (KTKAGGGKKKK) has biased composition (basic residues).

The protein belongs to the XPG/RAD2 endonuclease family. FEN1 subfamily. As to quaternary structure, interacts with PCNA. Three molecules of FEN1 bind to one PCNA trimer with each molecule binding to one PCNA monomer. PCNA stimulates the nuclease activity without altering cleavage specificity. It depends on Mg(2+) as a cofactor. Post-translationally, phosphorylated. Phosphorylation upon DNA damage induces relocalization to the nuclear plasma.

It localises to the nucleus. Its subcellular location is the nucleolus. The protein localises to the nucleoplasm. It is found in the mitochondrion. In terms of biological role, structure-specific nuclease with 5'-flap endonuclease and 5'-3' exonuclease activities involved in DNA replication and repair. During DNA replication, cleaves the 5'-overhanging flap structure that is generated by displacement synthesis when DNA polymerase encounters the 5'-end of a downstream Okazaki fragment. It enters the flap from the 5'-end and then tracks to cleave the flap base, leaving a nick for ligation. Also involved in the long patch base excision repair (LP-BER) pathway, by cleaving within the apurinic/apyrimidinic (AP) site-terminated flap. Acts as a genome stabilization factor that prevents flaps from equilibrating into structures that lead to duplications and deletions. Also possesses 5'-3' exonuclease activity on nicked or gapped double-stranded DNA, and exhibits RNase H activity. Also involved in replication and repair of rDNA and in repairing mitochondrial DNA. This chain is Flap endonuclease 1, found in Glycine max (Soybean).